The primary structure comprises 385 residues: AA13 family lytic polysaccharide monooxygenase NCU08746 (385 aa).

Residues Met-1–Ala-18 form the signal peptide. Residue His-19 participates in Cu(2+) binding. His-19 carries the methylhistidine modification. One can recognise a Chitin-binding type-4 domain in the interval His-19 to Ile-248. Cys-40 and Cys-43 are disulfide-bonded. Residue Asn-54 is glycosylated (N-linked (GlcNAc...) asparagine). 6 disulfides stabilise this stretch: Cys-66–Cys-245, Cys-102–Cys-203, Cys-118–Cys-145, Cys-153–Cys-161, Cys-167–Cys-173, and Cys-181–Cys-192. Cu(2+) is bound at residue His-109. A Cu(2+)-binding site is contributed by Tyr-242. Residues Cys-278–Lys-385 form the CBM20 domain. Residue Asn-365 is glycosylated (N-linked (GlcNAc...) asparagine).

This sequence belongs to the polysaccharide monooxygenase AA13 family. It depends on Cu(2+) as a cofactor.

It localises to the secreted. The catalysed reaction is starch + reduced acceptor + O2 = D-glucono-1,5-lactone-terminated malto-oligosaccharides + short-chain malto-oligosaccharides + acceptor + H2O.. Its function is as follows. Starch-active lytic polysaccharide monooxygenase that oxidizes the C1 position of starch substrates, but not in cellulose or chitin. Catalysis by LPMOs requires the reduction of the active-site copper from Cu(II) to Cu(I) by a reducing agent and H(2)O(2) or O(2) as a cosubstrate. The protein is AA13 family lytic polysaccharide monooxygenase NCU08746 of Neurospora crassa (strain ATCC 24698 / 74-OR23-1A / CBS 708.71 / DSM 1257 / FGSC 987).